Consider the following 990-residue polypeptide: Sister chromatid cohesion protein PDS5 homolog E (990 aa).

HEAT repeat units lie at residues 31–57 (DATL…SVQK), 58–96 (ALHP…ITAP), 153–190 (DLVL…DESE), 191–228 (EVPM…SCTC), and 232–269 (PCIM…HNDV). The interval 262-565 (TTQAHNDVKP…AGEEVESNTN (304 aa)) is disordered. Residues 267-281 (NDVKPKDNEADEKIS) show a composition bias toward basic and acidic residues. The segment covering 302–314 (KGTRSKRSARGGT) has biased composition (basic residues). 2 stretches are compositionally biased toward polar residues: residues 328-342 (EGLS…ASGS) and 394-410 (VGQT…SSGR). 3 stretches are compositionally biased toward basic and acidic residues: residues 421-430 (TKMEETDHDV), 448-477 (PAKE…EKAD), and 503-512 (VHSDAKKKNS). The Nuclear localization signal 1 motif lies at 458–465 (VKKHEDGI). 2 consecutive short sequence motifs (nuclear localization signal) follow at residues 539 to 546 (TKKSEQAP) and 583 to 590 (DKKFYEGV). The interval 653-966 (KKRKIVSKNV…VGNEAEEDDQ (314 aa)) is disordered. Positions 662 to 673 (VEPSSSPEVRSS) are enriched in low complexity. 2 consecutive short sequence motifs (nuclear localization signal) follow at residues 677-684 (MKKKDSVT) and 715-722 (LKKLNGEP). The span at 727–742 (GRTGKKQKVTQAMHRK) shows a compositional bias: basic residues. The segment covering 746–760 (DCDEQEDLETKDEED) has biased composition (acidic residues). Basic and acidic residues-rich tracts occupy residues 761-810 (SLKL…KTNG), 819-890 (TDGK…KETN), and 898-947 (EEQK…DKET).

It belongs to the PDS5 family. In terms of assembly, interacts with the cohesin complex.

The protein localises to the nucleus. In terms of biological role, cohesin cofactor dispensable during the meiotic division but playing an important role in DNA repair by homologous recombination (HR) probably by helping SMC5/SMC6 complex. Regulator of sister chromatid cohesion in mitosis which may stabilize cohesin complex association with chromatin. May couple sister chromatid cohesion during mitosis to DNA replication. Cohesion ensures that chromosome partitioning is accurate in both meiotic and mitotic cells and plays an important role in DNA repair. The polypeptide is Sister chromatid cohesion protein PDS5 homolog E (Arabidopsis thaliana (Mouse-ear cress)).